A 400-amino-acid polypeptide reads, in one-letter code: NADH-ubiquinone oxidoreductase 49 kDa subunit (400 aa).

This sequence belongs to the complex I 49 kDa subunit family.

The protein resides in the mitochondrion. It catalyses the reaction a ubiquinone + NADH + 5 H(+)(in) = a ubiquinol + NAD(+) + 4 H(+)(out). Functionally, core subunit of the mitochondrial membrane respiratory chain NADH dehydrogenase (Complex I) that is believed to belong to the minimal assembly required for catalysis. Complex I functions in the transfer of electrons from NADH to the respiratory chain. The immediate electron acceptor for the enzyme is believed to be ubiquinone. Component of the iron-sulfur (IP) fragment of the enzyme. Component of the iron-sulfur (IP) fragment of the enzyme. This is NADH-ubiquinone oxidoreductase 49 kDa subunit (NAD7) from Prototheca wickerhamii.